A 314-amino-acid chain; its full sequence is Bifunctional pinoresinol-lariciresinol reductase 3 (314 aa).

Residues 11-17, Arg36, and Lys45 each bind NADP(+); that span reads GGTGFIG. Lys138 functions as the Proton acceptor in the catalytic mechanism. Arg142 is an NADP(+) binding site. His272 contacts substrate.

Belongs to the NmrA-type oxidoreductase family. Isoflavone reductase subfamily. Dimer.

The enzyme catalyses (-)-lariciresinol + NADP(+) = (-)-pinoresinol + NADPH + H(+). It catalyses the reaction (+)-secoisolariciresinol + NADP(+) = (-)-lariciresinol + NADPH + H(+). Its function is as follows. Reductase involved in lignan biosynthesis. Catalyzes the enantioselective sequential conversion of (-)-pinoresinol into (-)-lariciresinol and of (-)-lariciresinol into (+)-secoisolariciresinol. Abstracts the 4R-hydride from the NADPH cofactor during catalysis. The protein is Bifunctional pinoresinol-lariciresinol reductase 3 of Thuja plicata (Western red-cedar).